The following is a 236-amino-acid chain: Phosphoribosylaminoimidazole-succinocarboxamide synthase (236 aa).

The protein belongs to the SAICAR synthetase family.

The enzyme catalyses 5-amino-1-(5-phospho-D-ribosyl)imidazole-4-carboxylate + L-aspartate + ATP = (2S)-2-[5-amino-1-(5-phospho-beta-D-ribosyl)imidazole-4-carboxamido]succinate + ADP + phosphate + 2 H(+). Its pathway is purine metabolism; IMP biosynthesis via de novo pathway; 5-amino-1-(5-phospho-D-ribosyl)imidazole-4-carboxamide from 5-amino-1-(5-phospho-D-ribosyl)imidazole-4-carboxylate: step 1/2. The sequence is that of Phosphoribosylaminoimidazole-succinocarboxamide synthase from Streptococcus equi subsp. zooepidemicus (strain MGCS10565).